The primary structure comprises 212 residues: Pyrrolidone-carboxylate peptidase (212 aa).

Catalysis depends on residues Glu80, Cys143, and His165.

It belongs to the peptidase C15 family. Homotetramer.

Its subcellular location is the cytoplasm. The catalysed reaction is Release of an N-terminal pyroglutamyl group from a polypeptide, the second amino acid generally not being Pro.. Functionally, removes 5-oxoproline from various penultimate amino acid residues except L-proline. This is Pyrrolidone-carboxylate peptidase from Vibrio campbellii (strain ATCC BAA-1116).